We begin with the raw amino-acid sequence, 320 residues long: Acetyl-coenzyme A carboxylase carboxyl transferase subunit alpha (320 aa).

The CoA carboxyltransferase C-terminal domain maps to 42–295 (IEEKALAALT…GDAIAKSFAD (254 aa)).

It belongs to the AccA family. As to quaternary structure, acetyl-CoA carboxylase is a heterohexamer composed of biotin carboxyl carrier protein (AccB), biotin carboxylase (AccC) and two subunits each of ACCase subunit alpha (AccA) and ACCase subunit beta (AccD).

It is found in the cytoplasm. The enzyme catalyses N(6)-carboxybiotinyl-L-lysyl-[protein] + acetyl-CoA = N(6)-biotinyl-L-lysyl-[protein] + malonyl-CoA. It functions in the pathway lipid metabolism; malonyl-CoA biosynthesis; malonyl-CoA from acetyl-CoA: step 1/1. Component of the acetyl coenzyme A carboxylase (ACC) complex. First, biotin carboxylase catalyzes the carboxylation of biotin on its carrier protein (BCCP) and then the CO(2) group is transferred by the carboxyltransferase to acetyl-CoA to form malonyl-CoA. The protein is Acetyl-coenzyme A carboxylase carboxyl transferase subunit alpha of Rhodopseudomonas palustris (strain BisA53).